A 227-amino-acid chain; its full sequence is Transcriptional regulatory protein CusR (227 aa).

Positions 2–116 (KLLIVEDEKK…ELLARVRTLL (115 aa)) constitute a Response regulatory domain. Position 51 is a 4-aspartylphosphate (D51). The segment at residues 125–223 (ESQFQVADLM…VRGVGYMLEV (99 aa)) is a DNA-binding region (ompR/PhoB-type).

Post-translationally, phosphorylated by CusS.

It localises to the cytoplasm. In terms of biological role, member of the two-component regulatory system CusS/CusR involved in response to copper and silver. The chain is Transcriptional regulatory protein CusR (cusR) from Escherichia coli O6:H1 (strain CFT073 / ATCC 700928 / UPEC).